Consider the following 636-residue polypeptide: PTS system beta-glucoside-specific EIIBCA component (636 aa).

Residues 1 to 86 (MKYEQLAKDI…VEIGGFQNQA (86 aa)) enclose the PTS EIIB type-1 domain. Cys26 (phosphocysteine intermediate; for EIIB activity) is an active-site residue. 10 helical membrane passes run 104–124 (IDIIASIFTPVLGVLAATGMI), 146–166 (LLHAIGDSLFYFFPIFLGYTA), 172–192 (ATPFIGMAIGASLVYPTLVVL), 215–235 (FLGIPVILMSYATSVIPIILA), 258–278 (LVPFFTLLIVVPLTFIVIGPI), 299–319 (IIAGAFLGGFWQVFVIFGLHW), 337–357 (VLAMVFAASFAQIGAVAAVWL), 369–389 (VPAFISGIFGVTEPAIYGVTL), 407–427 (AIIGLFRSQGYIIGGLGIFGI), and 444–464 (IVIAVVVAFVLGFILTYLFGL). Residues 105–476 (DIIASIFTPV…GNASDEQTET (372 aa)) form the PTS EIIC type-1 domain. Positions 472–492 (EQTETKAHTSTGTGEKEEISS) are disordered. The 105-residue stretch at 506 to 610 (DEAFSSGALG…AVTTPVIVTN (105 aa)) folds into the PTS EIIA type-1 domain. His558 functions as the Tele-phosphohistidine intermediate; for EIIA activity in the catalytic mechanism.

It localises to the cell membrane. Functionally, the phosphoenolpyruvate-dependent sugar phosphotransferase system (sugar PTS), a major carbohydrate active -transport system, catalyzes the phosphorylation of incoming sugar substrates concomitantly with their translocation across the cell membrane. This system is involved in beta-glucoside transport. This chain is PTS system beta-glucoside-specific EIIBCA component (bglP), found in Halalkalibacterium halodurans (strain ATCC BAA-125 / DSM 18197 / FERM 7344 / JCM 9153 / C-125) (Bacillus halodurans).